Reading from the N-terminus, the 202-residue chain is Arenicin-2 (202 aa).

Positions 1-25 are cleaved as a signal peptide; it reads MTSTQSVAVYATLILAIFCFNDIHC. The propeptide occupies 26–181; that stretch reads DPIAEARAAA…SGDNNEPEKR (156 aa). A BRICHOS domain is found at 73 to 168; sequence GDGVEGSVMV…ACQGKSVYWL (96 aa). Intrachain disulfides connect Cys-100–Cys-160 and Cys-184–Cys-201.

In terms of biological role, has antimicrobial activity against the Gram-negative bacteria E.coli and P.mirabilis, the Gram-positive bacterium L.monocytogenes and the yeast C.albicans. The polypeptide is Arenicin-2 (Arenicola marina (Lugworm)).